Reading from the N-terminus, the 458-residue chain is tRNA modification GTPase MnmE (458 aa).

3 residues coordinate (6S)-5-formyl-5,6,7,8-tetrahydrofolate: arginine 22, glutamate 84, and arginine 123. The TrmE-type G domain occupies 220–379; sequence GIATAIIGRP…LEKAIADLFF (160 aa). Residue asparagine 230 coordinates K(+). GTP is bound by residues 230–235, 249–255, and 274–277; these read NVGKSS, TDIAGTT, and DTAG. Serine 234 serves as a coordination point for Mg(2+). Positions 249, 251, and 254 each coordinate K(+). Threonine 255 serves as a coordination point for Mg(2+). A (6S)-5-formyl-5,6,7,8-tetrahydrofolate-binding site is contributed by lysine 458.

It belongs to the TRAFAC class TrmE-Era-EngA-EngB-Septin-like GTPase superfamily. TrmE GTPase family. As to quaternary structure, homodimer. Heterotetramer of two MnmE and two MnmG subunits. Requires K(+) as cofactor.

Its subcellular location is the cytoplasm. Functionally, exhibits a very high intrinsic GTPase hydrolysis rate. Involved in the addition of a carboxymethylaminomethyl (cmnm) group at the wobble position (U34) of certain tRNAs, forming tRNA-cmnm(5)s(2)U34. The polypeptide is tRNA modification GTPase MnmE (Bacillus anthracis).